Reading from the N-terminus, the 987-residue chain is KAT8 regulatory NSL complex subunit 1-like protein (987 aa).

Residue Lys134 forms a Glycyl lysine isopeptide (Lys-Gly) (interchain with G-Cter in SUMO2) linkage. A Phosphoserine modification is found at Ser462. The disordered stretch occupies residues 708–738 (RKKRHLSETALGERTKLEESDFQHTESGSHS). The span at 718 to 731 (LGERTKLEESDFQH) shows a compositional bias: basic and acidic residues. The PEHE domain occupies 794–915 (EILTPSWRMV…QSQETKSLWW (122 aa)). N6-acetyllysine is present on Lys859. Residues 949–972 (GEIFGTSVPENGHHPKKQSDGMEE) are disordered. Residues 959 to 972 (NGHHPKKQSDGMEE) are compositionally biased toward basic and acidic residues.

In terms of processing, acetylated on lysine residues by KAT8 upon ionizing radiation-induced DNA damage; deacetylated by HDAC3.

This Homo sapiens (Human) protein is KAT8 regulatory NSL complex subunit 1-like protein (KANSL1L).